The following is a 628-amino-acid chain: Biosynthetic arginine decarboxylase (628 aa).

K99 is modified (N6-(pyridoxal phosphate)lysine). 279–289 (VDVGGGLGIDY) is a substrate binding site.

The protein belongs to the Orn/Lys/Arg decarboxylase class-II family. SpeA subfamily. The cofactor is Mg(2+). Pyridoxal 5'-phosphate serves as cofactor.

It carries out the reaction L-arginine + H(+) = agmatine + CO2. It functions in the pathway amine and polyamine biosynthesis; agmatine biosynthesis; agmatine from L-arginine: step 1/1. In terms of biological role, catalyzes the biosynthesis of agmatine from arginine. The sequence is that of Biosynthetic arginine decarboxylase from Xylella fastidiosa (strain M12).